An 831-amino-acid polypeptide reads, in one-letter code: Prickle-like protein 1 (831 aa).

The PET domain occupies 14–122 (FGCQRSSTSD…TIKLLSRAVM (109 aa)). LIM zinc-binding domains follow at residues 124–189 (AVCE…LLKP), 189–249 (PRCS…LYAE), and 249–313 (EYCE…EDVH). Residues 313-342 (HASDSSDSAFQSARSRDSRRSVRMGKSSRS) form a disordered region. Ser-315, Ser-591, and Ser-594 each carry phosphoserine. Disordered stretches follow at residues 663–688 (FEER…NALN) and 763–831 (CSSS…CIIS). Basic residues predominate over residues 669-680 (RSHHHRRRRSRK). Position 683 is a phosphoserine (Ser-683). Basic residues predominate over residues 815–831 (TKSKKKKGHKGKNCIIS). Cys-828 carries the cysteine methyl ester modification. Cys-828 carries S-farnesyl cysteine lipidation. A propeptide spans 829–831 (IIS) (removed in mature form).

The protein belongs to the prickle / espinas / testin family. Interacts with REST. As to expression, expressed at highest levels in placenta and at lower levels in lung, liver, kidney and pancreas. Expressed in thalamus, hippocampus, cerebral cortex, and cerebellum (in neurons rather than glia).

The protein resides in the nucleus membrane. The protein localises to the cytoplasm. It is found in the cytosol. Its function is as follows. Involved in the planar cell polarity pathway that controls convergent extension during gastrulation and neural tube closure. Convergent extension is a complex morphogenetic process during which cells elongate, move mediolaterally, and intercalate between neighboring cells, leading to convergence toward the mediolateral axis and extension along the anteroposterior axis. Necessary for nuclear localization of REST. May serve as nuclear receptor. The sequence is that of Prickle-like protein 1 (PRICKLE1) from Homo sapiens (Human).